The following is a 485-amino-acid chain: Glutamyl-tRNA(Gln) amidotransferase subunit A (485 aa).

Active-site charge relay system residues include Lys78 and Ser153. Ser177 functions as the Acyl-ester intermediate in the catalytic mechanism.

It belongs to the amidase family. GatA subfamily. Heterotrimer of A, B and C subunits.

It carries out the reaction L-glutamyl-tRNA(Gln) + L-glutamine + ATP + H2O = L-glutaminyl-tRNA(Gln) + L-glutamate + ADP + phosphate + H(+). Functionally, allows the formation of correctly charged Gln-tRNA(Gln) through the transamidation of misacylated Glu-tRNA(Gln) in organisms which lack glutaminyl-tRNA synthetase. The reaction takes place in the presence of glutamine and ATP through an activated gamma-phospho-Glu-tRNA(Gln). This Bacillus cereus (strain ATCC 10987 / NRS 248) protein is Glutamyl-tRNA(Gln) amidotransferase subunit A.